The following is a 194-amino-acid chain: MSNEENKVNEEAVVEEQVEAVGTEADVEWNESAEDSQEAKIAELEAALLASQAQVKEQQDTVLRAKAEEQNVRRRAEEDVDKARKYALKKFAGELLPVLDNLERALESGDKENEAAKALLEGVELTLQTFVSTVEKFGLTVINPMGEAFNPELHQAIGMQASPDHESNTVMIVMQKGYTLNDQVLRPAMVMVAQ.

The protein belongs to the GrpE family. Homodimer.

The protein resides in the cytoplasm. Participates actively in the response to hyperosmotic and heat shock by preventing the aggregation of stress-denatured proteins, in association with DnaK and GrpE. It is the nucleotide exchange factor for DnaK and may function as a thermosensor. Unfolded proteins bind initially to DnaJ; upon interaction with the DnaJ-bound protein, DnaK hydrolyzes its bound ATP, resulting in the formation of a stable complex. GrpE releases ADP from DnaK; ATP binding to DnaK triggers the release of the substrate protein, thus completing the reaction cycle. Several rounds of ATP-dependent interactions between DnaJ, DnaK and GrpE are required for fully efficient folding. The protein is Protein GrpE of Aliivibrio fischeri (strain ATCC 700601 / ES114) (Vibrio fischeri).